The following is a 270-amino-acid chain: Glucosamine-6-phosphate deaminase (270 aa).

The active-site Proton acceptor; for enolization step is the Asp68. Residue Asp145 is the For ring-opening step of the active site. Catalysis depends on His147, which acts as the Proton acceptor; for ring-opening step. Glu152 functions as the For ring-opening step in the catalytic mechanism.

The protein belongs to the glucosamine/galactosamine-6-phosphate isomerase family. NagB subfamily.

It carries out the reaction alpha-D-glucosamine 6-phosphate + H2O = beta-D-fructose 6-phosphate + NH4(+). It participates in amino-sugar metabolism; N-acetylneuraminate degradation; D-fructose 6-phosphate from N-acetylneuraminate: step 5/5. Its function is as follows. Catalyzes the reversible isomerization-deamination of glucosamine 6-phosphate (GlcN6P) to form fructose 6-phosphate (Fru6P) and ammonium ion. In Bifidobacterium longum (strain NCC 2705), this protein is Glucosamine-6-phosphate deaminase.